Reading from the N-terminus, the 152-residue chain is Aspartate carbamoyltransferase regulatory chain (152 aa).

The Zn(2+) site is built by Cys109, Cys114, Cys138, and Cys141.

It belongs to the PyrI family. As to quaternary structure, contains catalytic and regulatory chains. Requires Zn(2+) as cofactor.

Functionally, involved in allosteric regulation of aspartate carbamoyltransferase. This chain is Aspartate carbamoyltransferase regulatory chain, found in Thermoplasma volcanium (strain ATCC 51530 / DSM 4299 / JCM 9571 / NBRC 15438 / GSS1).